Reading from the N-terminus, the 350-residue chain is Nuclear pore complex-interacting protein family member A3 (350 aa).

Residues lysine 306–aspartate 325 are disordered.

This sequence belongs to the NPIP family.

This is Nuclear pore complex-interacting protein family member A3 (NPIPA3) from Homo sapiens (Human).